The following is a 554-amino-acid chain: Formate--tetrahydrofolate ligase (554 aa).

64-71 (TPAGEGKS) is an ATP binding site.

It belongs to the formate--tetrahydrofolate ligase family.

It catalyses the reaction (6S)-5,6,7,8-tetrahydrofolate + formate + ATP = (6R)-10-formyltetrahydrofolate + ADP + phosphate. The protein operates within one-carbon metabolism; tetrahydrofolate interconversion. The sequence is that of Formate--tetrahydrofolate ligase from Leuconostoc citreum (strain KM20).